Here is a 907-residue protein sequence, read N- to C-terminus: Leucine-rich repeat-containing G-protein coupled receptor 5 (907 aa).

A signal peptide spans 1–21; that stretch reads MDTSRLGVLLSLPVLLQLATG. Topologically, residues 22-561 are extracellular; the sequence is GSSPRSGVLL…EHLLDGWLIR (540 aa). The LRRNT domain occupies 25-66; the sequence is PRSGVLLRGCPTHCHCEPDGRMLLRVDCSDLGLSELPSNLSV. Cystine bridges form between Cys-34–Cys-40 and Cys-38–Cys-52. 2 N-linked (GlcNAc...) asparagine glycosylation sites follow: Asn-63 and Asn-77. 16 LRR repeats span residues 67-90, 91-112, 115-136, 139-160, 163-184, 187-208, 211-232, 235-256, 258-279, 282-303, 306-328, 329-350, 353-374, 375-396, 399-420, and 423-446; these read FTSY…PSLR, FLEE…AFTG, SLKV…ALQN, SLQS…CFSG, SLRH…AFRS, ALQA…AFGN, SLVV…CFDG, SLET…IRTL, NLKE…AFVG, SLIT…AFQH, ELRT…TGTA, NLES…VCNQ, NLQV…SVCQ, KLQK…TFQQ, SLRS…AFST, and SLIK…HGLT. An N-linked (GlcNAc...) asparagine glycan is attached at Asn-208. The cysteines at positions 348 and 373 are disulfide-linked. An intrachain disulfide couples Cys-479 to Cys-541. Asn-500 carries an N-linked (GlcNAc...) asparagine glycan. A helical transmembrane segment spans residues 562–582; the sequence is IGVWTIAVLALTCNALVTSTV. The Cytoplasmic segment spans residues 583–593; the sequence is FRSPLYISPIK. A helical membrane pass occupies residues 594–614; sequence LLIGVIAAVNMLTGVSSAVLA. Topologically, residues 615–638 are extracellular; it reads GVDAFTFGSFARHGAWWENGVGCH. A disulfide bridge links Cys-637 with Cys-712. The helical transmembrane segment at 639–659 threads the bilayer; the sequence is VIGFLSIFASESSVFLLTLAA. At 660-682 the chain is on the cytoplasmic side; the sequence is LERGFSVKYSAKFETKAPFSSLK. The chain crosses the membrane as a helical span at residues 683–703; sequence VIILLCALLALTMAAVPLLGG. Residues 704–722 are Extracellular-facing; sequence SKYGASPLCLPLPFGEPST. A helical membrane pass occupies residues 723–743; the sequence is MGYMVALILLNSLCFLMMTIA. Residues 744-767 are Cytoplasmic-facing; sequence YTKLYCNLDKGDLENIWDCSMVKH. The chain crosses the membrane as a helical span at residues 768–788; the sequence is IALLLFTNCILNCPVAFLSFS. Over 789–802 the chain is Extracellular; it reads SLINLTFISPEVIK. Asn-792 carries an N-linked (GlcNAc...) asparagine glycan. The helical transmembrane segment at 803-823 threads the bilayer; that stretch reads FILLVVVPLPACLNPLLYILF. At 824–907 the chain is on the cytoplasmic side; the sequence is NPHFKEDLVS…LSSVAFVPCL (84 aa).

Belongs to the G-protein coupled receptor 1 family. Identified in a complex composed of RNF43, LGR5 and RSPO1. Also interacts with other R-spondin ligands, including RSPO2, RSPO3 and RSPO4. Expressed in skeletal muscle, placenta, spinal cord, and various region of brain. Expressed at the base of crypts in colonic and small mucosa stem cells. In premalignant cancer expression is not restricted to the cript base. Overexpressed in cancers of the ovary, colon and liver.

Its subcellular location is the cell membrane. It localises to the golgi apparatus. It is found in the trans-Golgi network membrane. Receptor for R-spondins that potentiates the canonical Wnt signaling pathway and acts as a stem cell marker of the intestinal epithelium and the hair follicle. Upon binding to R-spondins (RSPO1, RSPO2, RSPO3 or RSPO4), associates with phosphorylated LRP6 and frizzled receptors that are activated by extracellular Wnt receptors, triggering the canonical Wnt signaling pathway to increase expression of target genes. In contrast to classical G-protein coupled receptors, does not activate heterotrimeric G-proteins to transduce the signal. Involved in the development and/or maintenance of the adult intestinal stem cells during postembryonic development. This is Leucine-rich repeat-containing G-protein coupled receptor 5 (LGR5) from Homo sapiens (Human).